Reading from the N-terminus, the 280-residue chain is Phosphatidylglycerol--prolipoprotein diacylglyceryl transferase (280 aa).

4 consecutive transmembrane segments (helical) span residues 30–50, 71–91, 106–126, and 132–152; these read WYGL…RRII, FLLW…ILFY, IWNG…AIII, and AIPL…GLFF. Arginine 154 serves as a coordination point for a 1,2-diacyl-sn-glycero-3-phospho-(1'-sn-glycerol). 3 helical membrane-spanning segments follow: residues 188–208, 217–237, and 251–271; these read QLYE…WFVY, GLVT…VEFF, and WLTM…WAIA.

This sequence belongs to the Lgt family.

It localises to the cell inner membrane. The catalysed reaction is L-cysteinyl-[prolipoprotein] + a 1,2-diacyl-sn-glycero-3-phospho-(1'-sn-glycerol) = an S-1,2-diacyl-sn-glyceryl-L-cysteinyl-[prolipoprotein] + sn-glycerol 1-phosphate + H(+). It participates in protein modification; lipoprotein biosynthesis (diacylglyceryl transfer). Functionally, catalyzes the transfer of the diacylglyceryl group from phosphatidylglycerol to the sulfhydryl group of the N-terminal cysteine of a prolipoprotein, the first step in the formation of mature lipoproteins. This Rhizobium meliloti (strain 1021) (Ensifer meliloti) protein is Phosphatidylglycerol--prolipoprotein diacylglyceryl transferase.